The primary structure comprises 370 residues: Tomoregulin-1 (370 aa).

The signal sequence occupies residues 1–36 (MDGLHPASWMLLLGSLAFWSASSLLLFSLALPGARA). The Extracellular segment spans residues 37–320 (SNQLLSECHN…VPSRQKLTHV (284 aa)). The N-linked (GlcNAc...) asparagine glycan is linked to Asn-53. Kazal-like domains lie at 88 to 135 (ICQF…PCFS) and 179 to 227 (VCNI…SCIE). Cystine bridges form between Cys-89-Cys-119, Cys-93-Cys-112, Cys-101-Cys-133, Cys-180-Cys-211, Cys-184-Cys-204, Cys-193-Cys-225, Cys-265-Cys-278, Cys-273-Cys-289, and Cys-291-Cys-300. The EGF-like domain maps to 261 to 301 (NYIPCSENYNGYCVHGKCELSYSSQKASCRCDSGYTGQYCD). Residues 321 to 341 (LIAAIIGAVQIAIIVAIVMCI) traverse the membrane as a helical segment. The Cytoplasmic segment spans residues 342-370 (TRKCPKNNRGRRQKQNLGHFSSDTSSRMV). Residues 349–370 (NRGRRQKQNLGHFSSDTSSRMV) are disordered. Polar residues predominate over residues 356–370 (QNLGHFSSDTSSRMV).

It belongs to the tomoregulin family. As to quaternary structure, interacts with cripto. As to expression, expressed at highest levels in brain, and at lower levels in neuroendocrine tissues. Present in neurons from the diencephalon (at protein level).

The protein resides in the cell membrane. In terms of biological role, inhibits nodal/nr-1 and bmp signaling during neural patterning through interaction with cripto. The chain is Tomoregulin-1 (tmeff1) from Xenopus laevis (African clawed frog).